Here is a 762-residue protein sequence, read N- to C-terminus: 5-methyltetrahydropteroyltriglutamate--homocysteine methyltransferase (762 aa).

5-methyltetrahydropteroyltri-L-glutamate is bound by residues 17 to 20 and lysine 111; that span reads REWK. L-homocysteine is bound by residues 435 to 437 and glutamate 488; that span reads IGS. L-methionine is bound by residues 435 to 437 and glutamate 488; that span reads IGS. 5-methyltetrahydropteroyltri-L-glutamate contacts are provided by residues 519–520 and tryptophan 565; that span reads RC. Residue aspartate 603 participates in L-homocysteine binding. L-methionine is bound at residue aspartate 603. Glutamate 609 contributes to the 5-methyltetrahydropteroyltri-L-glutamate binding site. Histidine 645, cysteine 647, and glutamate 669 together coordinate Zn(2+). The Proton donor role is filled by histidine 698. Position 730 (cysteine 730) interacts with Zn(2+).

Belongs to the vitamin-B12 independent methionine synthase family. It depends on Zn(2+) as a cofactor.

It carries out the reaction 5-methyltetrahydropteroyltri-L-glutamate + L-homocysteine = tetrahydropteroyltri-L-glutamate + L-methionine. The protein operates within amino-acid biosynthesis; L-methionine biosynthesis via de novo pathway; L-methionine from L-homocysteine (MetE route): step 1/1. Functionally, catalyzes the transfer of a methyl group from 5-methyltetrahydrofolate to homocysteine resulting in methionine formation. This is 5-methyltetrahydropteroyltriglutamate--homocysteine methyltransferase from Bacillus cereus (strain ZK / E33L).